The following is a 525-amino-acid chain: Bifunctional purine biosynthesis protein PurH (525 aa).

Residues 1–149 form the MGS-like domain; it reads MSDPVIKRAL…KNHESVTVIT (149 aa).

This sequence belongs to the PurH family.

It catalyses the reaction (6R)-10-formyltetrahydrofolate + 5-amino-1-(5-phospho-beta-D-ribosyl)imidazole-4-carboxamide = 5-formamido-1-(5-phospho-D-ribosyl)imidazole-4-carboxamide + (6S)-5,6,7,8-tetrahydrofolate. It carries out the reaction IMP + H2O = 5-formamido-1-(5-phospho-D-ribosyl)imidazole-4-carboxamide. Its pathway is purine metabolism; IMP biosynthesis via de novo pathway; 5-formamido-1-(5-phospho-D-ribosyl)imidazole-4-carboxamide from 5-amino-1-(5-phospho-D-ribosyl)imidazole-4-carboxamide (10-formyl THF route): step 1/1. The protein operates within purine metabolism; IMP biosynthesis via de novo pathway; IMP from 5-formamido-1-(5-phospho-D-ribosyl)imidazole-4-carboxamide: step 1/1. This Chlorobium phaeobacteroides (strain BS1) protein is Bifunctional purine biosynthesis protein PurH.